The following is a 747-amino-acid chain: Major facilitator superfamily domain-containing protein 6-B (747 aa).

11 helical membrane-spanning segments follow: residues 15–35 (LLFF…CVLQ), 75–95 (KAVL…IGFV), 222–242 (TIFL…APAV), 271–291 (WGIA…TIFI), 306–326 (IAFI…TQFH), 391–411 (VLFV…FLFW), 420–440 (TTLF…AYFI), 453–470 (VLYI…YISY), 485–507 (GLTH…PPAL), 520–540 (LGLG…FFGA), and 546–566 (GLGM…WLLG). Composition is skewed to polar residues over residues 597 to 606 (NQSTSQPNSD) and 652 to 668 (NNDC…QTSA). Disordered stretches follow at residues 597 to 625 (NQST…NKPA) and 652 to 747 (NNDC…PTTH). Over residues 675–685 (STSSQPNASSS) the composition is skewed to low complexity.

This sequence belongs to the major facilitator superfamily. MFSD6 family.

The protein localises to the membrane. The sequence is that of Major facilitator superfamily domain-containing protein 6-B (mfsd6b) from Danio rerio (Zebrafish).